A 142-amino-acid chain; its full sequence is Large-conductance mechanosensitive channel (142 aa).

3 helical membrane-spanning segments follow: residues 14–34 (VVDLAVGVIIGAAFGAIVNSL), 38–58 (VIMPIIGAITGGLDFSNYYIP), and 82–102 (GQFLTLAVNFTIIAFVLFMVI).

The protein belongs to the MscL family. As to quaternary structure, homopentamer.

The protein resides in the cell inner membrane. In terms of biological role, channel that opens in response to stretch forces in the membrane lipid bilayer. May participate in the regulation of osmotic pressure changes within the cell. This Methylorubrum populi (strain ATCC BAA-705 / NCIMB 13946 / BJ001) (Methylobacterium populi) protein is Large-conductance mechanosensitive channel.